The sequence spans 797 residues: Inactive dipeptidyl peptidase 10 (797 aa).

The interval 1–28 (MKQEQQPTPGARATQSQPADQELGSNSP) is disordered. Topologically, residues 1-34 (MKQEQQPTPGARATQSQPADQELGSNSPPQRNWK) are cytoplasmic. A helical; Signal-anchor for type II membrane protein transmembrane segment spans residues 35 to 55 (GIAIALLVILVVCSLITMSVI). Over 56-797 (LLTPDELTNS…VLPQEPEEDE (742 aa)) the chain is Extracellular. N-linked (GlcNAc...) asparagine glycosylation is found at Asn64, Asn91, Asn112, and Asn120. A phosphotyrosine mark is found at Tyr139 and Tyr144. N-linked (GlcNAc...) asparagine glycans are attached at residues Asn258, Asn343, Asn518, and Asn749.

It belongs to the peptidase S9B family. DPPIV subfamily. As to quaternary structure, may form oligomers. Interacts with KCND1 and KCND2. N-glycosylation is important for cell surface expression, specially at Asn-258, which is crucial. Detected in brain cortex (at protein level). Expressed in the brain, predominantly by neurons and not by glia.

The protein resides in the cell membrane. In terms of biological role, promotes cell surface expression of the potassium channel KCND2. Modulates the activity and gating characteristics of the potassium channel KCND2. Has no dipeptidyl aminopeptidase activity. The sequence is that of Inactive dipeptidyl peptidase 10 (Dpp10) from Mus musculus (Mouse).